The following is a 145-amino-acid chain: Superoxide dismutase [Mn/Fe] (145 aa).

Fe(3+) contacts are provided by His-10 and His-64. 2 residues coordinate Mn(2+): His-10 and His-64.

This sequence belongs to the iron/manganese superoxide dismutase family. Mn(2+) serves as cofactor. The cofactor is Fe(3+).

The enzyme catalyses 2 superoxide + 2 H(+) = H2O2 + O2. Functionally, destroys superoxide anion radicals which are normally produced within the cells and which are toxic to biological systems. Catalyzes the dismutation of superoxide anion radicals into O2 and H2O2 by successive reduction and oxidation of the transition metal ion at the active site. The sequence is that of Superoxide dismutase [Mn/Fe] (sodA) from Streptococcus alactolyticus.